The primary structure comprises 278 residues: tRNA pseudouridine synthase A (278 aa).

Residue D52 is the Nucleophile of the active site. Substrate is bound at residue Y110. The tract at residues 259 to 278 (SKRQNGTTKVEQPSSYVHEE) is disordered. The segment covering 261–278 (RQNGTTKVEQPSSYVHEE) has biased composition (polar residues).

Belongs to the tRNA pseudouridine synthase TruA family. As to quaternary structure, homodimer.

The catalysed reaction is uridine(38/39/40) in tRNA = pseudouridine(38/39/40) in tRNA. Functionally, formation of pseudouridine at positions 38, 39 and 40 in the anticodon stem and loop of transfer RNAs. The polypeptide is tRNA pseudouridine synthase A (Chloroflexus aurantiacus (strain ATCC 29366 / DSM 635 / J-10-fl)).